We begin with the raw amino-acid sequence, 128 residues long: Small ribosomal subunit protein uS12 (128 aa).

Residue Asp-89 is modified to 3-methylthioaspartic acid.

This sequence belongs to the universal ribosomal protein uS12 family. In terms of assembly, part of the 30S ribosomal subunit. Contacts proteins S8 and S17. May interact with IF1 in the 30S initiation complex.

In terms of biological role, with S4 and S5 plays an important role in translational accuracy. Functionally, interacts with and stabilizes bases of the 16S rRNA that are involved in tRNA selection in the A site and with the mRNA backbone. Located at the interface of the 30S and 50S subunits, it traverses the body of the 30S subunit contacting proteins on the other side and probably holding the rRNA structure together. The combined cluster of proteins S8, S12 and S17 appears to hold together the shoulder and platform of the 30S subunit. This Campylobacter jejuni subsp. jejuni serotype O:6 (strain 81116 / NCTC 11828) protein is Small ribosomal subunit protein uS12.